We begin with the raw amino-acid sequence, 158 residues long: Ribonuclease H (158 aa).

Residues 5-146 (MRKQIEIFTD…CDQLAKQGAE (142 aa)) enclose the RNase H type-1 domain. Residues D14, E52, D74, and D138 each contribute to the Mg(2+) site.

Belongs to the RNase H family. In terms of assembly, monomer. Requires Mg(2+) as cofactor.

The protein resides in the cytoplasm. It carries out the reaction Endonucleolytic cleavage to 5'-phosphomonoester.. In terms of biological role, endonuclease that specifically degrades the RNA of RNA-DNA hybrids. In Mannheimia succiniciproducens (strain KCTC 0769BP / MBEL55E), this protein is Ribonuclease H.